Consider the following 249-residue polypeptide: 2,3-bisphosphoglycerate-dependent phosphoglycerate mutase (249 aa).

Substrate-binding positions include Arg-9–Asn-16, Thr-22–Gly-23, Arg-61, Glu-88–Tyr-91, Lys-99, Arg-115–Arg-116, and Gly-184–Asn-185. Residue His-10 is the Tele-phosphohistidine intermediate of the active site. The active-site Proton donor/acceptor is the Glu-88.

This sequence belongs to the phosphoglycerate mutase family. BPG-dependent PGAM subfamily. As to quaternary structure, homodimer.

It catalyses the reaction (2R)-2-phosphoglycerate = (2R)-3-phosphoglycerate. The protein operates within carbohydrate degradation; glycolysis; pyruvate from D-glyceraldehyde 3-phosphate: step 3/5. Its function is as follows. Catalyzes the interconversion of 2-phosphoglycerate and 3-phosphoglycerate. The chain is 2,3-bisphosphoglycerate-dependent phosphoglycerate mutase from Xylella fastidiosa (strain M23).